The chain runs to 394 residues: Probable acetyl-CoA acyltransferase (394 aa).

C88 serves as the catalytic Acyl-thioester intermediate. Active-site proton acceptor residues include H349 and C378.

This sequence belongs to the thiolase-like superfamily. Thiolase family.

The protein resides in the cytoplasm. The enzyme catalyses 2 acetyl-CoA = acetoacetyl-CoA + CoA. The sequence is that of Probable acetyl-CoA acyltransferase from Staphylococcus epidermidis (strain ATCC 35984 / DSM 28319 / BCRC 17069 / CCUG 31568 / BM 3577 / RP62A).